A 160-amino-acid chain; its full sequence is Triabin (160 aa).

The N-terminal stretch at 1 to 18 (MKTIIAVTIFGILTCAYA) is a signal peptide. Disulfide bonds link Cys24-Cys128, Cys57-Cys160, and Cys87-Cys102.

Belongs to the calycin superfamily. Triabin family. As to expression, expressed in salivary glands.

Its subcellular location is the secreted. Functionally, thrombin inhibitor. Forms a non-covalent complex with thrombin at a molar ratio of 1:1. Inhibits thrombin-induced platelet aggregation. Prolongs thrombin clotting time and activated partial thromboplastin time. It only minimally suppresses the amidolytic activity of thrombin. Inhibits thrombin-mediated fibrin formation in the host. Inhibits thrombin-induced endothelium-dependent relaxant and contractile responses in host blood vessels. Inhibits thrombin-induced mitogenesis in host vascular smooth muscle cells. The protein is Triabin of Meccus pallidipennis (Triatomine bug).